The chain runs to 456 residues: Histidine--tRNA ligase (456 aa).

This sequence belongs to the class-II aminoacyl-tRNA synthetase family. Homodimer.

It localises to the cytoplasm. The catalysed reaction is tRNA(His) + L-histidine + ATP = L-histidyl-tRNA(His) + AMP + diphosphate + H(+). This Cupriavidus taiwanensis (strain DSM 17343 / BCRC 17206 / CCUG 44338 / CIP 107171 / LMG 19424 / R1) (Ralstonia taiwanensis (strain LMG 19424)) protein is Histidine--tRNA ligase.